The primary structure comprises 344 residues: Fructose-1,6-bisphosphatase class 1 (344 aa).

Glu107, Asp129, Leu131, and Asp132 together coordinate Mg(2+). Positions 224, 252, and 282 each coordinate substrate. Glu288 contacts Mg(2+).

The protein belongs to the FBPase class 1 family. Homotetramer. The cofactor is Mg(2+).

The protein resides in the cytoplasm. It carries out the reaction beta-D-fructose 1,6-bisphosphate + H2O = beta-D-fructose 6-phosphate + phosphate. It participates in carbohydrate biosynthesis; Calvin cycle. This chain is Fructose-1,6-bisphosphatase class 1, found in Synechococcus sp. (strain ATCC 27144 / PCC 6301 / SAUG 1402/1) (Anacystis nidulans).